The following is a 226-amino-acid chain: Peroxynitrite isomerase 2 (226 aa).

The short motif at 73 to 79 is the GXWXGXG element; that stretch reads GVWRGEG. Heme b-binding residues include K189 and H216.

It belongs to the nitrobindin family. In terms of assembly, homodimer. Heme b serves as cofactor.

It carries out the reaction peroxynitrite = nitrate. The protein operates within nitrogen metabolism. In terms of biological role, heme-binding protein able to scavenge peroxynitrite and to protect free L-tyrosine against peroxynitrite-mediated nitration, by acting as a peroxynitrite isomerase that converts peroxynitrite to nitrate. Therefore, this protein likely plays a role in peroxynitrite sensing and in the detoxification of reactive nitrogen and oxygen species (RNS and ROS, respectively). Is able to bind nitric oxide (NO) in vitro, but may act as a sensor of peroxynitrite levels in vivo. The chain is Peroxynitrite isomerase 2 from Mycobacterium bovis (strain ATCC BAA-935 / AF2122/97).